The following is a 187-amino-acid chain: Threonylcarbamoyl-AMP synthase (187 aa).

In terms of domain architecture, YrdC-like spans 4-187 (TLTLSEAVTA…DARSGHILRL (184 aa)).

Belongs to the SUA5 family. TsaC subfamily.

Its subcellular location is the cytoplasm. The enzyme catalyses L-threonine + hydrogencarbonate + ATP = L-threonylcarbamoyladenylate + diphosphate + H2O. Its function is as follows. Required for the formation of a threonylcarbamoyl group on adenosine at position 37 (t(6)A37) in tRNAs that read codons beginning with adenine. Catalyzes the conversion of L-threonine, HCO(3)(-)/CO(2) and ATP to give threonylcarbamoyl-AMP (TC-AMP) as the acyladenylate intermediate, with the release of diphosphate. The polypeptide is Threonylcarbamoyl-AMP synthase (Xylella fastidiosa (strain 9a5c)).